The chain runs to 1076 residues: Carbamoyl phosphate synthase large chain (1076 aa).

The interval 1 to 403 is carboxyphosphate synthetic domain; that stretch reads MPKRTDIQSI…SLQKALRGLE (403 aa). ATP is bound by residues arginine 129, arginine 169, glycine 175, glycine 176, glutamate 208, leucine 210, glutamate 215, glycine 241, valine 242, histidine 243, glutamine 285, and glutamate 299. An ATP-grasp 1 domain is found at 133–328; it reads DQAMKRIGLE…IAKIAAKLAV (196 aa). Mg(2+) is bound by residues glutamine 285, glutamate 299, and asparagine 301. Glutamine 285, glutamate 299, and asparagine 301 together coordinate Mn(2+). The interval 404-553 is oligomerization domain; that stretch reads TGNDGLDPKV…YSSYEEECEA (150 aa). Positions 554–935 are carbamoyl phosphate synthetic domain; it reads EVSDRPKIMV…AFYKAQLGAG (382 aa). The ATP-grasp 2 domain maps to 678–869; sequence QHMVDKLGLK…LAQVAARCMA (192 aa). The ATP site is built by arginine 714, histidine 753, leucine 755, glutamate 760, glycine 785, valine 786, histidine 787, serine 788, glutamine 828, and glutamate 840. 3 residues coordinate Mg(2+): glutamine 828, glutamate 840, and asparagine 842. Residues glutamine 828, glutamate 840, and asparagine 842 each coordinate Mn(2+). Residues 936–1076 enclose the MGS-like domain; sequence EAIPALEGER…LQELHAGVSQ (141 aa). Residues 936 to 1076 form an allosteric domain region; the sequence is EAIPALEGER…LQELHAGVSQ (141 aa).

This sequence belongs to the CarB family. As to quaternary structure, composed of two chains; the small (or glutamine) chain promotes the hydrolysis of glutamine to ammonia, which is used by the large (or ammonia) chain to synthesize carbamoyl phosphate. Tetramer of heterodimers (alpha,beta)4. The cofactor is Mg(2+). Requires Mn(2+) as cofactor.

The catalysed reaction is hydrogencarbonate + L-glutamine + 2 ATP + H2O = carbamoyl phosphate + L-glutamate + 2 ADP + phosphate + 2 H(+). The enzyme catalyses hydrogencarbonate + NH4(+) + 2 ATP = carbamoyl phosphate + 2 ADP + phosphate + 2 H(+). The protein operates within amino-acid biosynthesis; L-arginine biosynthesis; carbamoyl phosphate from bicarbonate: step 1/1. Its pathway is pyrimidine metabolism; UMP biosynthesis via de novo pathway; (S)-dihydroorotate from bicarbonate: step 1/3. Large subunit of the glutamine-dependent carbamoyl phosphate synthetase (CPSase). CPSase catalyzes the formation of carbamoyl phosphate from the ammonia moiety of glutamine, carbonate, and phosphate donated by ATP, constituting the first step of 2 biosynthetic pathways, one leading to arginine and/or urea and the other to pyrimidine nucleotides. The large subunit (synthetase) binds the substrates ammonia (free or transferred from glutamine from the small subunit), hydrogencarbonate and ATP and carries out an ATP-coupled ligase reaction, activating hydrogencarbonate by forming carboxy phosphate which reacts with ammonia to form carbamoyl phosphate. The sequence is that of Carbamoyl phosphate synthase large chain from Halomonas eurihalina.